The chain runs to 65 residues: Hirudin-3A' (65 aa).

The interaction with thrombin active site stretch occupies residues 1–3 (VVY). Intrachain disulfides connect C6-C14, C16-C28, and C22-C39. Residues 32–65 (SDGEKNECVTGEGTPKPQSHNDGDFEEIPEEYLQ) are disordered. The O-linked (GalNAc...) threonine glycan is linked to T45. The interval 55-65 (DFEEIPEEYLQ) is interaction with fibrinogen-binding exosite of thrombin. Residues 55 to 65 (DFEEIPEEYLQ) are compositionally biased toward acidic residues. A Sulfotyrosine modification is found at Y63.

The protein belongs to the protease inhibitor I14 (hirudin) family.

It localises to the secreted. Hirudin is a potent thrombin-specific protease inhibitor. It forms a stable non-covalent complex with alpha-thrombin, thereby abolishing its ability to cleave fibrinogen. The chain is Hirudin-3A' from Hirudo medicinalis (Medicinal leech).